We begin with the raw amino-acid sequence, 882 residues long: Valine--tRNA ligase (882 aa).

Positions 52–62 (PNVTGSLHMGH) match the 'HIGH' region motif. Residues 539–543 (KMSKS) carry the 'KMSKS' region motif. ATP is bound at residue Lys-542. Residues 816–882 (IDVAAERRRL…RINARLAVLQ (67 aa)) are a coiled coil.

It belongs to the class-I aminoacyl-tRNA synthetase family. ValS type 1 subfamily. Monomer.

It is found in the cytoplasm. The enzyme catalyses tRNA(Val) + L-valine + ATP = L-valyl-tRNA(Val) + AMP + diphosphate. Its function is as follows. Catalyzes the attachment of valine to tRNA(Val). As ValRS can inadvertently accommodate and process structurally similar amino acids such as threonine, to avoid such errors, it has a 'posttransfer' editing activity that hydrolyzes mischarged Thr-tRNA(Val) in a tRNA-dependent manner. The chain is Valine--tRNA ligase from Mycolicibacterium paratuberculosis (strain ATCC BAA-968 / K-10) (Mycobacterium paratuberculosis).